The sequence spans 689 residues: Pentatricopeptide repeat-containing protein At2g03380, mitochondrial (689 aa).

The N-terminal 12 residues, 1–12 (MLRSITLSPTRR), are a transit peptide targeting the mitochondrion. 16 PPR repeats span residues 75 to 105 (DISI…IPEP), 106 to 140 (DFYL…GFRY), 141 to 171 (DDIV…LVKV), 175 to 205 (DNVV…ITLR), 206 to 240 (NVVC…NVLG), 241 to 275 (NEYT…GIEL), 276 to 306 (SSCL…HSHV), 307 to 341 (DLVM…EIKP), 342 to 372 (NCVT…SIKV), 376 to 406 (DTNV…ESEK), 407 to 441 (DIVA…SVTP), 442 to 476 (NGVT…GFLA), 479 to 509 (SVHV…IEEK), 510 to 544 (NTIT…QQKP), 545 to 580 (NEST…NFTP), and 581 to 611 (STKH…MPIQ). The type E motif; degenerate stretch occupies residues 616 to 689 (CFGAFLHGCG…SKIAGHSTME (74 aa)).

It belongs to the PPR family. PCMP-E subfamily.

The protein localises to the mitochondrion. This Arabidopsis thaliana (Mouse-ear cress) protein is Pentatricopeptide repeat-containing protein At2g03380, mitochondrial (PCMP-E47).